Here is a 272-residue protein sequence, read N- to C-terminus: 3-methyl-2-oxobutanoate hydroxymethyltransferase (272 aa).

Residues D52 and D91 each contribute to the Mg(2+) site. 3-methyl-2-oxobutanoate-binding positions include 52–53 (DS), D91, and K121. A Mg(2+)-binding site is contributed by E123. Catalysis depends on E190, which acts as the Proton acceptor.

It belongs to the PanB family. Homodecamer; pentamer of dimers. Requires Mg(2+) as cofactor.

It is found in the cytoplasm. It catalyses the reaction 3-methyl-2-oxobutanoate + (6R)-5,10-methylene-5,6,7,8-tetrahydrofolate + H2O = 2-dehydropantoate + (6S)-5,6,7,8-tetrahydrofolate. The protein operates within cofactor biosynthesis; (R)-pantothenate biosynthesis; (R)-pantoate from 3-methyl-2-oxobutanoate: step 1/2. Catalyzes the reversible reaction in which hydroxymethyl group from 5,10-methylenetetrahydrofolate is transferred onto alpha-ketoisovalerate to form ketopantoate. This chain is 3-methyl-2-oxobutanoate hydroxymethyltransferase, found in Christiangramia forsetii (strain DSM 17595 / CGMCC 1.15422 / KT0803) (Gramella forsetii).